A 317-amino-acid polypeptide reads, in one-letter code: Melanocyte-stimulating hormone receptor (317 aa).

The Extracellular portion of the chain corresponds to 1–37; that stretch reads MPVQGSQRRLLGSLNSTPTATPRLGLAANQTGARCLE. Residue Asn-29 is glycosylated (N-linked (GlcNAc...) asparagine). Residues 38–63 traverse the membrane as a helical segment; that stretch reads VSIPDGLFLSLGLVSLVENVLVVVAI. Topologically, residues 64–72 are cytoplasmic; it reads ARNRNLHSP. The helical transmembrane segment at 73–93 threads the bilayer; the sequence is MYCFICCLALSDLLVSGSNML. The Extracellular portion of the chain corresponds to 94–118; it reads ETAVFLLLEAGALAARAAVVQQLDN. The helical transmembrane segment at 119–140 threads the bilayer; the sequence is VIDVITCSSMLSSLCFLGAIAV. At 141–163 the chain is on the cytoplasmic side; that stretch reads DRYISIFYALRYHSIVTLRRARR. Residues 164-183 form a helical membrane-spanning segment; sequence VVAAIWVASVLFSTLFIAYC. Residues 184-191 are Extracellular-facing; it reads DHAAVLLC. Residues 192–211 form a helical membrane-spanning segment; sequence LVVFFLAMLVLMAVLYVHML. The Cytoplasmic segment spans residues 212–240; that stretch reads ARACQHAQGIAQLHKRQRPAHQGVGLKGA. The helical transmembrane segment at 241–266 threads the bilayer; it reads ATLTILLGIFFLCWGPFFLHLTLIVL. At 267–279 the chain is on the extracellular side; it reads CPQHPTCSCIFKN. A helical transmembrane segment spans residues 280–300; that stretch reads FNLFLTLIICNAIIDPLIYAF. At 301 to 317 the chain is on the cytoplasmic side; the sequence is RSQELRRTLKKVLLCSW. Residue Cys-315 is the site of S-palmitoyl cysteine attachment.

It belongs to the G-protein coupled receptor 1 family. As to quaternary structure, interacts with MGRN1, but does not undergo MGRN1-mediated ubiquitination; this interaction competes with GNAS-binding and thus inhibits agonist-induced cAMP production. Interacts with OPN3; the interaction results in a decrease in MC1R-mediated cAMP signaling and ultimately a decrease in melanin production in melanocytes.

It is found in the cell membrane. In terms of biological role, receptor for MSH (alpha, beta and gamma) and ACTH. The activity of this receptor is mediated by G proteins which activate adenylate cyclase. Mediates melanogenesis, the production of eumelanin (black/brown) and phaeomelanin (red/yellow), via regulation of cAMP signaling in melanocytes. In Trachypithecus obscurus (Dusky leaf-monkey), this protein is Melanocyte-stimulating hormone receptor (MC1R).